A 302-amino-acid chain; its full sequence is 4-hydroxy-tetrahydrodipicolinate synthase (302 aa).

Threonine 55 lines the pyruvate pocket. The active-site Proton donor/acceptor is the tyrosine 144. Lysine 172 (schiff-base intermediate with substrate) is an active-site residue. Residue valine 214 participates in pyruvate binding.

It belongs to the DapA family. In terms of assembly, homotetramer; dimer of dimers.

It localises to the cytoplasm. The enzyme catalyses L-aspartate 4-semialdehyde + pyruvate = (2S,4S)-4-hydroxy-2,3,4,5-tetrahydrodipicolinate + H2O + H(+). Its pathway is amino-acid biosynthesis; L-lysine biosynthesis via DAP pathway; (S)-tetrahydrodipicolinate from L-aspartate: step 3/4. Catalyzes the condensation of (S)-aspartate-beta-semialdehyde [(S)-ASA] and pyruvate to 4-hydroxy-tetrahydrodipicolinate (HTPA). This is 4-hydroxy-tetrahydrodipicolinate synthase from Prochlorococcus marinus (strain SARG / CCMP1375 / SS120).